Reading from the N-terminus, the 74-residue chain is Kappa-scoloptoxin(07)-Ssm2d (74 aa).

The N-terminal stretch at 1–19 (MLVFYALLFVTVFSNTVMG) is a signal peptide. A propeptide spanning residues 20–41 (ATIDKPIPKPILREAIEEIEVN) is cleaved from the precursor.

This sequence belongs to the scoloptoxin-07 family. Contains 3 disulfide bonds. In terms of tissue distribution, expressed by the venom gland.

It localises to the secreted. Its function is as follows. Inhibits voltage-gated potassium channels. This Scolopendra mutilans (Chinese red-headed centipede) protein is Kappa-scoloptoxin(07)-Ssm2d.